The sequence spans 404 residues: Probable tRNA sulfurtransferase (404 aa).

The THUMP domain occupies 61-166; that stretch reads EAVSERLKDV…SGYSYIMCDE (106 aa). Residues 184 to 185, 209 to 210, R266, G288, and Q297 each bind ATP; these read LL and HF.

The protein belongs to the ThiI family.

The protein resides in the cytoplasm. It carries out the reaction [ThiI sulfur-carrier protein]-S-sulfanyl-L-cysteine + a uridine in tRNA + 2 reduced [2Fe-2S]-[ferredoxin] + ATP + H(+) = [ThiI sulfur-carrier protein]-L-cysteine + a 4-thiouridine in tRNA + 2 oxidized [2Fe-2S]-[ferredoxin] + AMP + diphosphate. The enzyme catalyses [ThiS sulfur-carrier protein]-C-terminal Gly-Gly-AMP + S-sulfanyl-L-cysteinyl-[cysteine desulfurase] + AH2 = [ThiS sulfur-carrier protein]-C-terminal-Gly-aminoethanethioate + L-cysteinyl-[cysteine desulfurase] + A + AMP + 2 H(+). The protein operates within cofactor biosynthesis; thiamine diphosphate biosynthesis. Functionally, catalyzes the ATP-dependent transfer of a sulfur to tRNA to produce 4-thiouridine in position 8 of tRNAs, which functions as a near-UV photosensor. Also catalyzes the transfer of sulfur to the sulfur carrier protein ThiS, forming ThiS-thiocarboxylate. This is a step in the synthesis of thiazole, in the thiamine biosynthesis pathway. The sulfur is donated as persulfide by IscS. The sequence is that of Probable tRNA sulfurtransferase from Bacillus cereus (strain ZK / E33L).